Reading from the N-terminus, the 105-residue chain is Urease subunit beta (105 aa).

It belongs to the urease beta subunit family. As to quaternary structure, heterotrimer of UreA (gamma), UreB (beta) and UreC (alpha) subunits. Three heterotrimers associate to form the active enzyme.

It localises to the cytoplasm. It catalyses the reaction urea + 2 H2O + H(+) = hydrogencarbonate + 2 NH4(+). Its pathway is nitrogen metabolism; urea degradation; CO(2) and NH(3) from urea (urease route): step 1/1. The polypeptide is Urease subunit beta (Pseudomonas putida (strain GB-1)).